We begin with the raw amino-acid sequence, 229 residues long: Translation initiation factor IF-3 (229 aa).

Disordered regions lie at residues 1–21 (MAIQ…TNRR) and 184–229 (QAQR…AGPR). A compositionally biased stretch (low complexity) spans 192–203 (AAAQAAPAAAPQ). Positions 204–221 (PGAPAAPPAAPAPAPAPE) are enriched in pro residues.

The protein belongs to the IF-3 family. In terms of assembly, monomer.

It is found in the cytoplasm. Functionally, IF-3 binds to the 30S ribosomal subunit and shifts the equilibrium between 70S ribosomes and their 50S and 30S subunits in favor of the free subunits, thus enhancing the availability of 30S subunits on which protein synthesis initiation begins. The polypeptide is Translation initiation factor IF-3 (Anaeromyxobacter sp. (strain Fw109-5)).